A 29-amino-acid chain; its full sequence is Galanin (29 aa).

Alanine 29 carries the post-translational modification Alanine amide.

The protein belongs to the galanin family.

It localises to the secreted. Its function is as follows. Contracts smooth muscle of the gastrointestinal and genitourinary tract, regulates growth hormone release, modulates insulin release, and may be involved in the control of adrenal secretion. The sequence is that of Galanin (GAL) from Alligator mississippiensis (American alligator).